The chain runs to 158 residues: RNA pyrophosphohydrolase (158 aa).

A Nudix hydrolase domain is found at 6–149; the sequence is GYRLNVGIVL…KRHVYRKVMK (144 aa). Residues 38 to 59 carry the Nudix box motif; that stretch reads GGINIGETPEQAMYRELFEEIG.

Belongs to the Nudix hydrolase family. RppH subfamily. It depends on a divalent metal cation as a cofactor.

Functionally, accelerates the degradation of transcripts by removing pyrophosphate from the 5'-end of triphosphorylated RNA, leading to a more labile monophosphorylated state that can stimulate subsequent ribonuclease cleavage. This chain is RNA pyrophosphohydrolase, found in Blochmanniella floridana.